Consider the following 1342-residue polypeptide: Restriction of telomere capping protein 1 (1342 aa).

The disordered stretch occupies residues 1 to 39 (MSLSPHVENASIPKGSTPIPKNRNVSSIGKGEFLGSSSS). WD repeat units lie at residues 207–248 (NKFS…SIDN), 256–296 (EHTR…SKSS), 305–342 (TASD…YKFA), 367–406 (AHTG…NAAE), 439–486 (NTGY…IPKH), and 489–527 (LSET…TVLE). 5 disordered regions span residues 559 to 593 (PELQ…IGGI), 600 to 619 (TGLT…GPTF), 630 to 651 (ASSF…ENRE), 736 to 766 (KNAT…DDDD), and 788 to 831 (LMNE…DRSR). Residues 630 to 644 (ASSFNSSSASLTSLT) are compositionally biased toward low complexity. Residues 753 to 766 (DDGDDDDDDDDDDD) show a composition bias toward acidic residues. A compositionally biased stretch (low complexity) spans 815 to 824 (SSISSISASR). The stretch at 844-884 (KIQTLVDLISIATHNASVYLSIDDLTNFKIWILIRDSLLWD) is one WD 7 repeat. Disordered stretches follow at residues 942–963 (AFRA…KLKE) and 1014–1047 (DEHE…PILQ). Composition is skewed to basic and acidic residues over residues 952 to 963 (DAEKKPVSKLKE) and 1016 to 1028 (HEHQ…HDSP). Residues S1037, S1081, S1088, S1090, S1124, and S1134 each carry the phosphoserine modification. 2 WD repeats span residues 1130 to 1170 (SRPD…KQLY) and 1217 to 1256 (LFGI…LITN). The segment at 1294–1336 (CVLCERPLKKLTMVILPCGHEGHFQCIQEWFLDENEQECPGGC) adopts an RING-type; degenerate zinc-finger fold.

Belongs to the WD repeat RTC1 family.

The protein localises to the vacuole. Functionally, may be involved in a process influencing telomere capping. This Saccharomyces cerevisiae (strain JAY291) (Baker's yeast) protein is Restriction of telomere capping protein 1 (RTC1).